Consider the following 287-residue polypeptide: Putative sugar uptake protein EF_0928 (287 aa).

The next 10 membrane-spanning stretches (helical) occupy residues 5 to 27 (IALVPMIAWGSIGLVSGKIGGSA), 32 to 49 (LGMTIGALLFSIVVFFVI), 53 to 71 (LTTATLIVGFISGLFWSLG), 84 to 106 (VSVGLPISTGMQLVVNTVAGAVF), 116 to 134 (FVVGFIALAFLVFGVYLTA), 155 to 177 (IRALIFSTVGYGVYTIIINATGL), 182 to 200 (IILPQSIGMLVGASFFAFK), 207 to 229 (FVWMNMTTGLLWGLGNICMLLTM), 234 to 256 (LAISFSLSQMGIIISTLGGIFLL), and 265 to 284 (MFYVIFGCIFVILGGILLGY).

It belongs to the GRP transporter (TC 2.A.7.5) family.

The protein localises to the cell membrane. The polypeptide is Putative sugar uptake protein EF_0928 (Enterococcus faecalis (strain ATCC 700802 / V583)).